Reading from the N-terminus, the 255-residue chain is MAADIRIVPCLTDNFGYLIHDPSSGATASIDAPEAAPLIAALEKEGWKLTDILVTHHHGDHVGGVAELKKKYQCRVVAPHDANAKIADIDLRVEEGDVVRVGGLSARVLETPGHTLDHISYVFDDDRALFAADTLFSIGCGRVFEGTYPMMWESLLKLRELPDDFKLYCGHEYTASNVKFALTIEPDNAALQARAKQVEQQRAAGQPTIPVTLGEEKQANLFLRADVPSVAAAVGLPGESAADVFGELRERKNNS.

Zn(2+) is bound by residues His56, His58, Asp60, His61, His114, Asp133, and His171.

Belongs to the metallo-beta-lactamase superfamily. Glyoxalase II family. As to quaternary structure, monomer. Zn(2+) is required as a cofactor.

It catalyses the reaction an S-(2-hydroxyacyl)glutathione + H2O = a 2-hydroxy carboxylate + glutathione + H(+). It functions in the pathway secondary metabolite metabolism; methylglyoxal degradation; (R)-lactate from methylglyoxal: step 2/2. Thiolesterase that catalyzes the hydrolysis of S-D-lactoyl-glutathione to form glutathione and D-lactic acid. In Rhodopseudomonas palustris (strain BisB5), this protein is Hydroxyacylglutathione hydrolase.